An 852-amino-acid polypeptide reads, in one-letter code: Protein SEY1 (852 aa).

Over 1 to 738 the chain is Cytoplasmic; sequence MNGHFAAVGN…KRSAIGGITQ (738 aa). The GB1/RHD3-type G domain occupies 47–283; that stretch reads GFNYHLISVF…FVGGVFLPEY (237 aa). Position 57-64 (57-64) interacts with GTP; that stretch reads GSQSTGKS. Positions 475-500 form a coiled coil; it reads QYRLFEKELDEVSARLRKEEMRRLAI. Residues 739-759 form a helical membrane-spanning segment; the sequence is VPLYFYIVLLIFGWNEIVMVL. Residues 760–762 lie on the Lumenal side of the membrane; that stretch reads RNP. Residues 763-783 form a helical membrane-spanning segment; the sequence is MLFMLLLVMGGGTYVAYTLNL. Residues 784-852 lie on the Cytoplasmic side of the membrane; it reads LGPMMQMANA…AQEVEEDDDI (69 aa). Positions 825-852 are disordered; it reads RSQDNGIGMDRLDSRGKKAQEVEEDDDI. Residues 834–845 show a composition bias toward basic and acidic residues; the sequence is DRLDSRGKKAQE.

This sequence belongs to the TRAFAC class dynamin-like GTPase superfamily. GB1/RHD3 GTPase family. RHD3 subfamily.

The protein localises to the endoplasmic reticulum membrane. Cooperates with the reticulon proteins and tubule-shaping DP1 family proteins to generate and maintain the structure of the tubular endoplasmic reticulum network. Has GTPase activity, which is required for its function in ER organization. This chain is Protein SEY1, found in Chaetomium globosum (strain ATCC 6205 / CBS 148.51 / DSM 1962 / NBRC 6347 / NRRL 1970) (Soil fungus).